The primary structure comprises 312 residues: 2-phosphoglycerate kinase (312 aa).

Residues 8 to 95 (SRILVTDKEY…LWRRVLKKHS (88 aa)) enclose the ATP-cone domain.

Belongs to the 2-phosphoglycerate kinase family. A divalent metal cation serves as cofactor.

It carries out the reaction (2R)-2-phosphoglycerate + ATP = (2R)-2,3-bisphosphoglycerate + ADP + H(+). Its pathway is thermoadapter biosynthesis; cyclic 2,3-diphosphoglycerate biosynthesis; cyclic 2,3-diphosphoglycerate from 2-phospho-D-glycerate: step 1/2. Catalyzes the phosphorylation of 2-phosphoglycerate to 2,3-diphosphoglycerate. Involved in the biosynthesis of cyclic 2,3-bisphosphoglycerate, a thermoprotectant. In Methanococcus maripaludis (strain C7 / ATCC BAA-1331), this protein is 2-phosphoglycerate kinase.